A 466-amino-acid chain; its full sequence is Cysteine--tRNA ligase (466 aa).

Zn(2+) is bound at residue Cys-29. The short motif at 31-41 (ATVQAAPHIGH) is the 'HIGH' region element. Positions 208, 233, and 237 each coordinate Zn(2+). A 'KMSKS' region motif is present at residues 264 to 268 (KMSKS). An ATP-binding site is contributed by Lys-267.

Belongs to the class-I aminoacyl-tRNA synthetase family. In terms of assembly, monomer. The cofactor is Zn(2+).

It localises to the cytoplasm. It catalyses the reaction tRNA(Cys) + L-cysteine + ATP = L-cysteinyl-tRNA(Cys) + AMP + diphosphate. The sequence is that of Cysteine--tRNA ligase from Streptomyces griseus subsp. griseus (strain JCM 4626 / CBS 651.72 / NBRC 13350 / KCC S-0626 / ISP 5235).